The following is a 148-amino-acid chain: Glutamyl-tRNA(Gln) amidotransferase subunit C, mitochondrial (148 aa).

The N-terminal 10 residues, 1–10, are a transit peptide targeting the mitochondrion; the sequence is MLRLLNKRFY.

It belongs to the GatC family. As to quaternary structure, subunit of the heterotrimeric GatCAB amidotransferase (AdT) complex, composed of A, B and C subunits.

The protein resides in the mitochondrion. It catalyses the reaction L-glutamyl-tRNA(Gln) + L-glutamine + ATP + H2O = L-glutaminyl-tRNA(Gln) + L-glutamate + ADP + phosphate + H(+). Its function is as follows. Allows the formation of correctly charged Gln-tRNA(Gln) through the transamidation of misacylated Glu-tRNA(Gln) in the mitochondria. The reaction takes place in the presence of glutamine and ATP through an activated gamma-phospho-Glu-tRNA(Gln). The polypeptide is Glutamyl-tRNA(Gln) amidotransferase subunit C, mitochondrial (Drosophila ananassae (Fruit fly)).